A 107-amino-acid chain; its full sequence is Large ribosomal subunit protein uL24 (107 aa).

Belongs to the universal ribosomal protein uL24 family. As to quaternary structure, part of the 50S ribosomal subunit.

One of two assembly initiator proteins, it binds directly to the 5'-end of the 23S rRNA, where it nucleates assembly of the 50S subunit. Functionally, one of the proteins that surrounds the polypeptide exit tunnel on the outside of the subunit. This Fervidobacterium nodosum (strain ATCC 35602 / DSM 5306 / Rt17-B1) protein is Large ribosomal subunit protein uL24.